Here is a 165-residue protein sequence, read N- to C-terminus: Transcription elongation factor GreA (165 aa).

Residues 55–78 (AAKEEQGKQELRVRQLTQLLESAK) adopt a coiled-coil conformation.

This sequence belongs to the GreA/GreB family.

Necessary for efficient RNA polymerase transcription elongation past template-encoded arresting sites. The arresting sites in DNA have the property of trapping a certain fraction of elongating RNA polymerases that pass through, resulting in locked ternary complexes. Cleavage of the nascent transcript by cleavage factors such as GreA or GreB allows the resumption of elongation from the new 3'terminus. GreA releases sequences of 2 to 3 nucleotides. The polypeptide is Transcription elongation factor GreA (Streptomyces coelicolor (strain ATCC BAA-471 / A3(2) / M145)).